Reading from the N-terminus, the 224-residue chain is LexA repressor (224 aa).

Residues 31–51 constitute a DNA-binding region (H-T-H motif); that stretch reads RAEIAAEFGFKSANAAEEHLQ. Catalysis depends on for autocatalytic cleavage activity residues Ser142 and Lys179.

This sequence belongs to the peptidase S24 family. In terms of assembly, homodimer.

The enzyme catalyses Hydrolysis of Ala-|-Gly bond in repressor LexA.. Represses a number of genes involved in the response to DNA damage (SOS response), including recA and lexA. In the presence of single-stranded DNA, RecA interacts with LexA causing an autocatalytic cleavage which disrupts the DNA-binding part of LexA, leading to derepression of the SOS regulon and eventually DNA repair. This is LexA repressor from Paracidovorax citrulli (strain AAC00-1) (Acidovorax citrulli).